A 414-amino-acid polypeptide reads, in one-letter code: Serine hydroxymethyltransferase (414 aa).

Residues Leu121 and 125-127 (GHL) contribute to the (6S)-5,6,7,8-tetrahydrofolate site. Lys229 carries the post-translational modification N6-(pyridoxal phosphate)lysine.

Belongs to the SHMT family. As to quaternary structure, homodimer. Pyridoxal 5'-phosphate is required as a cofactor.

It localises to the cytoplasm. It carries out the reaction (6R)-5,10-methylene-5,6,7,8-tetrahydrofolate + glycine + H2O = (6S)-5,6,7,8-tetrahydrofolate + L-serine. It participates in one-carbon metabolism; tetrahydrofolate interconversion. The protein operates within amino-acid biosynthesis; glycine biosynthesis; glycine from L-serine: step 1/1. Functionally, catalyzes the reversible interconversion of serine and glycine with tetrahydrofolate (THF) serving as the one-carbon carrier. This reaction serves as the major source of one-carbon groups required for the biosynthesis of purines, thymidylate, methionine, and other important biomolecules. Also exhibits THF-independent aldolase activity toward beta-hydroxyamino acids, producing glycine and aldehydes, via a retro-aldol mechanism. This is Serine hydroxymethyltransferase from Janthinobacterium sp. (strain Marseille) (Minibacterium massiliensis).